An 878-amino-acid chain; its full sequence is Phosphoenolpyruvate carboxylase (878 aa).

Catalysis depends on residues His140 and Lys545.

It belongs to the PEPCase type 1 family. The cofactor is Mg(2+).

It catalyses the reaction oxaloacetate + phosphate = phosphoenolpyruvate + hydrogencarbonate. Forms oxaloacetate, a four-carbon dicarboxylic acid source for the tricarboxylic acid cycle. This Pseudomonas syringae pv. tomato (strain ATCC BAA-871 / DC3000) protein is Phosphoenolpyruvate carboxylase.